The following is a 141-amino-acid chain: Large ribosomal subunit protein uL11 (141 aa).

It belongs to the universal ribosomal protein uL11 family. Part of the ribosomal stalk of the 50S ribosomal subunit. Interacts with L10 and the large rRNA to form the base of the stalk. L10 forms an elongated spine to which L12 dimers bind in a sequential fashion forming a multimeric L10(L12)X complex. One or more lysine residues are methylated.

In terms of biological role, forms part of the ribosomal stalk which helps the ribosome interact with GTP-bound translation factors. This chain is Large ribosomal subunit protein uL11, found in Streptococcus suis (strain 98HAH33).